Here is a 142-residue protein sequence, read N- to C-terminus: Putative pre-16S rRNA nuclease (142 aa).

The protein belongs to the YqgF nuclease family.

It localises to the cytoplasm. Its function is as follows. Could be a nuclease involved in processing of the 5'-end of pre-16S rRNA. The protein is Putative pre-16S rRNA nuclease of Blochmanniella floridana.